The primary structure comprises 331 residues: Bifunctional nuclease 1 (331 aa).

The BFN domain occupies 126 to 261 (CVQNNPRVLR…RIAYNNGLKV (136 aa)). Residues 291-326 (EAQEFDLVRNMLVAAVEERYKDAAQYRDQLFMFRAK) form the UVR domain.

This sequence belongs to the bifunctional nuclease family.

It localises to the nucleus. Functionally, bifunctional nuclease with both RNase and DNase activities. Involved in basal defense response. Participates in abscisic acid-derived callose deposition following infection by a necrotrophic pathogen. The sequence is that of Bifunctional nuclease 1 (BBD1) from Oryza sativa subsp. japonica (Rice).